The sequence spans 198 residues: MNRPRPVEKMVGIIKKLPGVGHKMAERLSYHILKMPQVEVDRLIDSIQNARRTMKCCSICCNLSEHDPCPICSDVTREKNIVCVVETPQDLIAVSKVEDYKGLYFVLGGALSPLDAVGPDDIRIDKLIKRLKRDSINEVIIATDADSKGEITAVYLADIIKILGIKVTRLGYGLPVGGDIEYADEITISRAIAGRKEM.

The C4-type zinc-finger motif lies at Cys57–Cys72. The Toprim domain maps to Asn80–Pro175.

This sequence belongs to the RecR family.

May play a role in DNA repair. It seems to be involved in an RecBC-independent recombinational process of DNA repair. It may act with RecF and RecO. This is Recombination protein RecR from Endomicrobium trichonymphae.